The sequence spans 105 residues: Antitoxin YfjZ (105 aa).

This sequence belongs to the CbeA/YafW/YfjZ antitoxin family.

Antitoxin component of a type IV toxin-antitoxin (TA) system. Antitoxin that counteracts the effect of cognate toxin YpjF. Also counteracts the effect of non-cognate toxins CbtA and YfkI. This chain is Antitoxin YfjZ (yfjZ), found in Escherichia coli (strain K12).